We begin with the raw amino-acid sequence, 205 residues long: Arginine exporter protein ArgO (205 aa).

A run of 6 helical transmembrane segments spans residues 1 to 21 (MLAV…PLGP), 42 to 62 (LCAL…SALL), 67 to 87 (LLLA…GWGA), 111 to 131 (IIVT…DTFV), 147 to 167 (WFAF…ALLA), and 182 to 202 (VINL…ARQG).

It belongs to the LysE/ArgO transporter (TC 2.A.75) family.

Its subcellular location is the cell inner membrane. The catalysed reaction is L-arginine(in) = L-arginine(out). Involved in the export of arginine. Important to control the intracellular level of arginine and the correct balance between arginine and lysine. This Yersinia enterocolitica serotype O:8 / biotype 1B (strain NCTC 13174 / 8081) protein is Arginine exporter protein ArgO.